A 197-amino-acid polypeptide reads, in one-letter code: Phosphoheptose isomerase (197 aa).

The 157-residue stretch at 41–197 folds into the SIS domain; that stretch reads VVETFRRGGK…EIVERTLFEE (157 aa). Residue 56–58 participates in substrate binding; sequence NGG. Residues histidine 65 and glutamate 69 each coordinate Zn(2+). Residues glutamate 69, 98–99, 124–126, serine 129, and glutamine 176 each bind substrate; these read ND and STS. Residues glutamine 176 and histidine 184 each coordinate Zn(2+).

This sequence belongs to the SIS family. GmhA subfamily. Requires Zn(2+) as cofactor.

The protein localises to the cytoplasm. The catalysed reaction is 2 D-sedoheptulose 7-phosphate = D-glycero-alpha-D-manno-heptose 7-phosphate + D-glycero-beta-D-manno-heptose 7-phosphate. It functions in the pathway carbohydrate biosynthesis; D-glycero-D-manno-heptose 7-phosphate biosynthesis; D-glycero-alpha-D-manno-heptose 7-phosphate and D-glycero-beta-D-manno-heptose 7-phosphate from sedoheptulose 7-phosphate: step 1/1. Catalyzes the isomerization of sedoheptulose 7-phosphate in D-glycero-D-manno-heptose 7-phosphate. The chain is Phosphoheptose isomerase from Roseiflexus sp. (strain RS-1).